Here is a 135-residue protein sequence, read N- to C-terminus: MATRLLCYTVLCLLGARILNSKVIQTPRYLVKGQGQKAKMRCIPEKGHPVVFWYQQNKNNEFKFLINFQNQEVLQQIDMTEKRFSAECPSNSPCSLEIQSSEAGDSALYLCASSLFGTSDYTFGSGTRLLVIGKA.

The first 20 residues, 1-20 (MATRLLCYTVLCLLGARILN), serve as a signal peptide directing secretion. The v segment stretch occupies residues 21-115 (SKVIQTPRYL…SALYLCASSL (95 aa)). Residues C42 and C111 are joined by a disulfide bond. The interval 116 to 118 (FGT) is d segment. The j segment stretch occupies residues 119–135 (SDYTFGSGTRLLVIGKA).

The sequence is that of T-cell receptor beta chain V region 3H.25 from Mus musculus (Mouse).